The following is a 180-amino-acid chain: GTP cyclohydrolase 1 (180 aa).

3 residues coordinate Zn(2+): Cys71, His74, and Cys142.

The protein belongs to the GTP cyclohydrolase I family. As to quaternary structure, toroid-shaped homodecamer, composed of two pentamers of five dimers.

The enzyme catalyses GTP + H2O = 7,8-dihydroneopterin 3'-triphosphate + formate + H(+). It functions in the pathway cofactor biosynthesis; 7,8-dihydroneopterin triphosphate biosynthesis; 7,8-dihydroneopterin triphosphate from GTP: step 1/1. The polypeptide is GTP cyclohydrolase 1 (Helicobacter acinonychis (strain Sheeba)).